The sequence spans 502 residues: Tubulin gamma chain (502 aa).

Residues 51-68 (ELNNSGSSPQSYPQQTKP) are compositionally biased toward polar residues. The disordered stretch occupies residues 51 to 73 (ELNNSGSSPQSYPQQTKPNGKYR). 169–175 (AGGTGSG) contacts GTP. Positions 473 to 482 (DDEDDLEDGD) are enriched in acidic residues. Residues 473 to 502 (DDEDDLEDGDGGGGGNGNGYNNIDDADMGI) form a disordered region.

Belongs to the tubulin family.

The protein localises to the cytoplasm. Its subcellular location is the cytoskeleton. It localises to the microtubule organizing center. It is found in the spindle pole body. Tubulin is the major constituent of microtubules. The gamma chain is found at microtubule organizing centers (MTOC) such as the spindle poles or the centrosome, suggesting that it is involved in the minus-end nucleation of microtubule assembly. This chain is Tubulin gamma chain (TUB4), found in Candida albicans (Yeast).